A 260-amino-acid polypeptide reads, in one-letter code: Type III pantothenate kinase (260 aa).

6 to 13 (DAGNTRIK) contacts ATP. Substrate-binding positions include tyrosine 100 and 107–110 (GADR). Catalysis depends on aspartate 109, which acts as the Proton acceptor. An ATP-binding site is contributed by threonine 133. Threonine 186 serves as a coordination point for substrate.

This sequence belongs to the type III pantothenate kinase family. In terms of assembly, homodimer. The cofactor is NH4(+). K(+) serves as cofactor.

It localises to the cytoplasm. The catalysed reaction is (R)-pantothenate + ATP = (R)-4'-phosphopantothenate + ADP + H(+). The protein operates within cofactor biosynthesis; coenzyme A biosynthesis; CoA from (R)-pantothenate: step 1/5. Its function is as follows. Catalyzes the phosphorylation of pantothenate (Pan), the first step in CoA biosynthesis. The polypeptide is Type III pantothenate kinase (Janthinobacterium sp. (strain Marseille) (Minibacterium massiliensis)).